Consider the following 139-residue polypeptide: S-protein homolog 14 (139 aa).

The signal sequence occupies residues 1–20 (MNRFIIFMFVVVTYFGLNVA). An N-linked (GlcNAc...) asparagine glycan is attached at Asn136.

Belongs to the plant self-incompatibility (S1) protein family.

It is found in the secreted. The protein is S-protein homolog 14 of Arabidopsis thaliana (Mouse-ear cress).